The primary structure comprises 277 residues: Thiazole synthase (277 aa).

The active-site Schiff-base intermediate with DXP is the lysine 118. 1-deoxy-D-xylulose 5-phosphate contacts are provided by residues glycine 179, 205 to 206, and 227 to 228; these read AG and NT.

The protein belongs to the ThiG family. Homotetramer. Forms heterodimers with either ThiH or ThiS.

Its subcellular location is the plastid. It is found in the chloroplast. The enzyme catalyses [ThiS sulfur-carrier protein]-C-terminal-Gly-aminoethanethioate + 2-iminoacetate + 1-deoxy-D-xylulose 5-phosphate = [ThiS sulfur-carrier protein]-C-terminal Gly-Gly + 2-[(2R,5Z)-2-carboxy-4-methylthiazol-5(2H)-ylidene]ethyl phosphate + 2 H2O + H(+). It participates in cofactor biosynthesis; thiamine diphosphate biosynthesis. Functionally, catalyzes the rearrangement of 1-deoxy-D-xylulose 5-phosphate (DXP) to produce the thiazole phosphate moiety of thiamine. Sulfur is provided by the thiocarboxylate moiety of the carrier protein ThiS. In vitro, sulfur can be provided by H(2)S. This chain is Thiazole synthase, found in Emiliania huxleyi (Coccolithophore).